We begin with the raw amino-acid sequence, 207 residues long: Holliday junction branch migration complex subunit RuvA (207 aa).

The interval 1-68 (MIGYLQGSLA…EDQWLLFGFL (68 aa)) is domain I. A domain II region spans residues 69 to 147 (QMAERDLFRQ…EWREEAGLLP (79 aa)). Positions 148-158 (SATAAPIAAVQ) are flexible linker. The tract at residues 158–207 (QEDVEMTLLALGYNNREILQALTAIAQENLVQSGQPAEDWIREAIAWLSR) is domain III.

The protein belongs to the RuvA family. In terms of assembly, homotetramer. Forms an RuvA(8)-RuvB(12)-Holliday junction (HJ) complex. HJ DNA is sandwiched between 2 RuvA tetramers; dsDNA enters through RuvA and exits via RuvB. An RuvB hexamer assembles on each DNA strand where it exits the tetramer. Each RuvB hexamer is contacted by two RuvA subunits (via domain III) on 2 adjacent RuvB subunits; this complex drives branch migration. In the full resolvosome a probable DNA-RuvA(4)-RuvB(12)-RuvC(2) complex forms which resolves the HJ.

It localises to the cytoplasm. In terms of biological role, the RuvA-RuvB-RuvC complex processes Holliday junction (HJ) DNA during genetic recombination and DNA repair, while the RuvA-RuvB complex plays an important role in the rescue of blocked DNA replication forks via replication fork reversal (RFR). RuvA specifically binds to HJ cruciform DNA, conferring on it an open structure. The RuvB hexamer acts as an ATP-dependent pump, pulling dsDNA into and through the RuvAB complex. HJ branch migration allows RuvC to scan DNA until it finds its consensus sequence, where it cleaves and resolves the cruciform DNA. This is Holliday junction branch migration complex subunit RuvA from Synechococcus elongatus (strain ATCC 33912 / PCC 7942 / FACHB-805) (Anacystis nidulans R2).